The primary structure comprises 618 residues: NAD(P)H-quinone oxidoreductase subunit 5, organellar chromatophore 2 (618 aa).

A run of 17 helical transmembrane segments spans residues 16–36, 43–63, 99–119, 129–149, 152–172, 190–210, 220–240, 267–287, 291–311, 318–335, 348–368, 390–410, 419–438, 461–481, 495–515, 553–573, and 597–617; these read LIPI…TGWI, TPAY…SLAL, LAAL…ALGY, FFAL…SDSL, SYFL…FWYA, GDVM…GMEF, NTLT…GPIG, SVVV…LHHS, IAVL…VSIA, TLSY…IAIA, AHAI…AVSN, LIAG…CFGL, APWF…LNLT, WQMA…PWMM, AITG…GAIV, IVSG…NGFV, and SYIL…SWLV.

It belongs to the complex I subunit 5 family. As to quaternary structure, NDH is composed of at least 16 different subunits, 5 of which are encoded in the nucleus.

The protein localises to the plastid. It is found in the organellar chromatophore thylakoid membrane. It carries out the reaction a plastoquinone + NADH + (n+1) H(+)(in) = a plastoquinol + NAD(+) + n H(+)(out). It catalyses the reaction a plastoquinone + NADPH + (n+1) H(+)(in) = a plastoquinol + NADP(+) + n H(+)(out). Functionally, NDH shuttles electrons from NAD(P)H:plastoquinone, via FMN and iron-sulfur (Fe-S) centers, to quinones in the photosynthetic chain and possibly in a chloroplast respiratory chain. The immediate electron acceptor for the enzyme in this species is believed to be plastoquinone. Couples the redox reaction to proton translocation, and thus conserves the redox energy in a proton gradient. The polypeptide is NAD(P)H-quinone oxidoreductase subunit 5, organellar chromatophore 2 (ndhF2) (Paulinella chromatophora).